Here is a 248-residue protein sequence, read N- to C-terminus: Ribonuclease PH (248 aa).

Residues Arg93 and 131-133 (GTR) each bind phosphate.

It belongs to the RNase PH family. In terms of assembly, homohexameric ring arranged as a trimer of dimers.

It catalyses the reaction tRNA(n+1) + phosphate = tRNA(n) + a ribonucleoside 5'-diphosphate. In terms of biological role, phosphorolytic 3'-5' exoribonuclease that plays an important role in tRNA 3'-end maturation. Removes nucleotide residues following the 3'-CCA terminus of tRNAs; can also add nucleotides to the ends of RNA molecules by using nucleoside diphosphates as substrates, but this may not be physiologically important. Probably plays a role in initiation of 16S rRNA degradation (leading to ribosome degradation) during starvation. This chain is Ribonuclease PH, found in Bifidobacterium longum (strain NCC 2705).